Here is a 342-residue protein sequence, read N- to C-terminus: Bifunctional terpene synthase Agr4 (342 aa).

The Mg(2+) site is built by Asp-87, Asn-222, Ser-226, and Glu-230. The DDXXD motif motif lies at 87–91; that stretch reads DEVSD. (2E,6E)-farnesyl diphosphate is bound by residues Arg-308 and Tyr-309.

It belongs to the terpene synthase family. Mg(2+) is required as a cofactor.

It catalyses the reaction (2E,6E)-farnesyl diphosphate = delta-cadinene + diphosphate. The catalysed reaction is (2E,6E)-farnesyl diphosphate = gamma-muurolene + diphosphate. It carries out the reaction (2E,6E)-farnesyl diphosphate = beta-copaene + diphosphate. The enzyme catalyses (2E)-geranyl diphosphate = beta-myrcene + diphosphate. Terpene cyclase that catalyzes the cyclization of farnesyl diphosphate (FPP) to various sesquiterpenes, including beta-copaene, alpha-cubebene, cadina-1(6),4-diene, gamma-muurolene, delta-cadinene, epizonarene, epicubenol and cubenol. Agr4 is also able to use the monoterpene precursor geranyl diphosphate (GPP) as substrates to synthesize the monoterpene beta-myrcene. Delta-cadinene is the major product of Agr4. The chain is Bifunctional terpene synthase Agr4 from Cyclocybe aegerita (Black poplar mushroom).